A 478-amino-acid polypeptide reads, in one-letter code: Proline--tRNA ligase (478 aa).

This sequence belongs to the class-II aminoacyl-tRNA synthetase family. ProS type 3 subfamily. In terms of assembly, homodimer.

The protein resides in the cytoplasm. It carries out the reaction tRNA(Pro) + L-proline + ATP = L-prolyl-tRNA(Pro) + AMP + diphosphate. Catalyzes the attachment of proline to tRNA(Pro) in a two-step reaction: proline is first activated by ATP to form Pro-AMP and then transferred to the acceptor end of tRNA(Pro). This Clostridium botulinum (strain 657 / Type Ba4) protein is Proline--tRNA ligase.